Here is a 131-residue protein sequence, read N- to C-terminus: EG45-like domain containing protein (131 aa).

The signal sequence occupies residues 1-24; that stretch reads MGVGTKVLVITTMAICLISSAAYA. In terms of domain architecture, Expansin-like EG45; incomplete spans 27-131; it reads GTATFYTPPY…GKIKIEFNQA (105 aa). Cysteines 73 and 85 form a disulfide.

Expressed in the outer layer of xylem and the vascular cambial zone of roots, in shoot cambium, but not in leaves.

The protein resides in the secreted. In terms of biological role, might have a systemic role in water and solute homeostasis. Has no expansin-like activity. The chain is EG45-like domain containing protein (CjBAp12) from Citrus jambhiri (Rough lemon).